Reading from the N-terminus, the 495-residue chain is Putative BTB/POZ domain-containing protein L98 (495 aa).

One can recognise a BTB domain in the interval 15-85 (SDLTIEFVDN…FYGIETTNDY (71 aa)).

The protein belongs to the mimivirus BTB/WD family.

The sequence is that of Putative BTB/POZ domain-containing protein L98 from Acanthamoeba polyphaga (Amoeba).